The following is a 786-amino-acid chain: Ribosome biogenesis protein BOP1 homolog (786 aa).

Over residues 1–11 the composition is skewed to basic residues; that stretch reads MTKKLTIKRKV. Positions 1–161 are disordered; the sequence is MTKKLTIKRK…DSDTSDEEDI (161 aa). Composition is skewed to acidic residues over residues 28 to 37, 46 to 55, 62 to 74, and 86 to 103; these read DNEEEEEEDL, EDSTDDEGID, SSED…DEEG, and SGDD…EDDA. Over residues 104–113 the composition is skewed to basic and acidic residues; that stretch reads DAKKSSKNND. Over residues 151 to 160 the composition is skewed to acidic residues; that stretch reads ADSDTSDEED. WD repeat units follow at residues 447–488, 490–528, 572–614, 617–655, 658–697, 701–740, and 756–786; these read GHTD…RTIE, EDVV…KLLV, THFK…SQIP, KSKG…LIKK, TNSK…KPYQ, LHRN…DLLQ, and REEF…RLFT.

Belongs to the WD repeat BOP1/ERB1 family.

It localises to the nucleus. It is found in the nucleolus. The protein localises to the nucleoplasm. In terms of biological role, required for maturation of ribosomal RNAs and formation of the large ribosomal subunit. The chain is Ribosome biogenesis protein BOP1 homolog from Drosophila pseudoobscura pseudoobscura (Fruit fly).